A 75-amino-acid polypeptide reads, in one-letter code: uncharacterized protein (75 aa).

The N-terminal stretch at 1-25 is a signal peptide; sequence MSLFYRAVALGTLSALVWYSTSILA. The chain crosses the membrane as a helical span at residues 55 to 75; sequence YRALLAFSLVICGTLLVTCVI.

Its subcellular location is the host endoplasmic reticulum membrane. Its function is as follows. Plays a role in the down-regulation of the host NKG2D ligand MICA by targeting ER-resident MICA to proteasomal degradation prior to the GPI-anchoring step. In turn, MICA reduction diminishes NK-cell killing of HCMV-infected cells. This is an uncharacterized protein from Homo sapiens (Human).